A 737-amino-acid polypeptide reads, in one-letter code: Palmitoyltransferase AKR1 (737 aa).

The interval 1–47 (MKQIDSEDSITVPNDTPEDNSASSMQPVMSNLSIEEHQSENEPIEQE) is disordered. The Cytoplasmic portion of the chain corresponds to 1-304 (MKQIDSEDSI…VYFKKSLHTK (304 aa)). Positions 9–33 (SITVPNDTPEDNSASSMQPVMSNLS) are enriched in polar residues. ANK repeat units follow at residues 54–84 (PLLS…DLKH), 90–119 (ERVS…DVNF), 124–153 (LNAT…DPSV), 157–190 (QGFN…DIDC), 194–223 (NGRT…SVKA), and 227–256 (GGFT…DFFQ). Helical transmembrane passes span 305-325 (LVTF…FASI) and 326-346 (HPIF…YTLK). Over 347–364 (KYVIPAYAQRNTRQSFLK) the chain is Cytoplasmic. The chain crosses the membrane as a helical span at residues 365 to 385 (TPFLAGVFSGSVFWASYTWLT). The Lumenal portion of the chain corresponds to 386 to 396 (RIMPLTLIEEP). Residues 397–417 (ITNLLFFAGVVLLASLFVKLV) form a helical membrane-spanning segment. Residues 418 to 493 (RSDPGLIPEE…YNDIGLRNHK (76 aa)) are Cytoplasmic-facing. A DHHC domain is found at 450-500 (HFCISTWVRKPIRSKFSNFSRALVTRFDHFCPWIYNDIGLRNHKTFLFFIL). The active-site S-palmitoyl cysteine intermediate is the C480. A helical transmembrane segment spans residues 494–514 (TFLFFILCLETCIFVFLKLCM). Residues 515–547 (EYFDVLEDTFEDDYDLNCGIFGEDLCAGFFFDT) are Lumenal-facing. A helical transmembrane segment spans residues 548 to 568 (FTFLVLAWTCFQGIWVGFLTF). At 569 to 737 (VQLFQTAKGV…ERHYLAEEIV (169 aa)) the chain is on the cytoplasmic side.

It belongs to the DHHC palmitoyltransferase family. AKR/ZDHHC17 subfamily.

It is found in the early endosome membrane. The protein localises to the golgi apparatus membrane. The enzyme catalyses L-cysteinyl-[protein] + hexadecanoyl-CoA = S-hexadecanoyl-L-cysteinyl-[protein] + CoA. In terms of biological role, palmitoyltransferase specific for casein kinase 1. This chain is Palmitoyltransferase AKR1 (AKR1), found in Lachancea kluyveri (strain ATCC 58438 / CBS 3082 / BCRC 21498 / NBRC 1685 / JCM 7257 / NCYC 543 / NRRL Y-12651) (Yeast).